The sequence spans 249 residues: 5'-nucleotidase SurE (249 aa).

Residues Asp-9, Asp-10, Ser-40, and Asn-92 each contribute to the a divalent metal cation site.

This sequence belongs to the SurE nucleotidase family. It depends on a divalent metal cation as a cofactor.

The protein localises to the cytoplasm. It catalyses the reaction a ribonucleoside 5'-phosphate + H2O = a ribonucleoside + phosphate. In terms of biological role, nucleotidase that shows phosphatase activity on nucleoside 5'-monophosphates. The polypeptide is 5'-nucleotidase SurE (Shewanella baltica (strain OS195)).